The sequence spans 252 residues: Coenzyme F420:L-glutamate ligase (252 aa).

Residues 11 to 14 (MPLV), 45 to 46 (ET), and K50 each bind GTP. Position 115 (D115) interacts with a divalent metal cation. N118 lines the GTP pocket. The a divalent metal cation site is built by D156, T157, and Q214. 212-219 (MGQADEGV) contributes to the GTP binding site.

The protein belongs to the CofE family. As to quaternary structure, homodimer. Mg(2+) is required as a cofactor. Mn(2+) serves as cofactor. The cofactor is K(+).

It carries out the reaction oxidized coenzyme F420-0 + GTP + L-glutamate = oxidized coenzyme F420-1 + GDP + phosphate + H(+). The catalysed reaction is oxidized coenzyme F420-1 + GTP + L-glutamate = oxidized coenzyme F420-2 + GDP + phosphate + H(+). It functions in the pathway cofactor biosynthesis; coenzyme F420 biosynthesis. In terms of biological role, catalyzes the GTP-dependent successive addition of two or more gamma-linked L-glutamates to the L-lactyl phosphodiester of 7,8-didemethyl-8-hydroxy-5-deazariboflavin (F420-0) to form coenzyme F420-0-glutamyl-glutamate (F420-2) or polyglutamated F420 derivatives. In Methanothermobacter thermautotrophicus (strain ATCC 29096 / DSM 1053 / JCM 10044 / NBRC 100330 / Delta H) (Methanobacterium thermoautotrophicum), this protein is Coenzyme F420:L-glutamate ligase.